The primary structure comprises 588 residues: Aspartate--tRNA ligase (588 aa).

Glu-174 provides a ligand contact to L-aspartate. The aspartate stretch occupies residues 198–201 (QLFK). L-aspartate is bound at residue Arg-220. Residues 220–222 (RDE) and Gln-229 contribute to the ATP site. His-448 provides a ligand contact to L-aspartate. Glu-482 lines the ATP pocket. An L-aspartate-binding site is contributed by Arg-489. An ATP-binding site is contributed by 534–537 (GIDR).

It belongs to the class-II aminoacyl-tRNA synthetase family. Type 1 subfamily. As to quaternary structure, homodimer.

It localises to the cytoplasm. It carries out the reaction tRNA(Asp) + L-aspartate + ATP = L-aspartyl-tRNA(Asp) + AMP + diphosphate. Functionally, catalyzes the attachment of L-aspartate to tRNA(Asp) in a two-step reaction: L-aspartate is first activated by ATP to form Asp-AMP and then transferred to the acceptor end of tRNA(Asp). The protein is Aspartate--tRNA ligase of Xanthomonas oryzae pv. oryzae (strain PXO99A).